Consider the following 62-residue polypeptide: Large ribosomal subunit protein bL28 (62 aa).

A disordered region spans residues M1–T28. Positions S14–K26 are enriched in polar residues.

The protein belongs to the bacterial ribosomal protein bL28 family.

The chain is Large ribosomal subunit protein bL28 from Bacillus licheniformis (strain ATCC 14580 / DSM 13 / JCM 2505 / CCUG 7422 / NBRC 12200 / NCIMB 9375 / NCTC 10341 / NRRL NRS-1264 / Gibson 46).